The sequence spans 302 residues: Decaprenyl-phosphate phosphoribosyltransferase (302 aa).

Residue Lys-28 coordinates 5-phospho-alpha-D-ribose 1-diphosphate. The next 2 membrane-spanning stretches (helical) occupy residues 30–50 (VLVL…DYVE) and 55–75 (VSMA…VNDV). Tyr-70 provides a ligand contact to 5-phospho-alpha-D-ribose 1-diphosphate. Mg(2+) is bound by residues Asn-73 and Asp-77. Lys-87 contributes to the 5-phospho-alpha-D-ribose 1-diphosphate binding site. A run of 2 helical transmembrane segments spans residues 100–120 (WLAY…AWML) and 122–142 (PNLA…CFGL). 2 residues coordinate 5-phospho-alpha-D-ribose 1-diphosphate: Lys-143 and Arg-160. Transmembrane regions (helical) follow at residues 146-166 (AVVE…AGGV) and 170-190 (IPLS…MVAG). Lys-191 is a trans,octa-cis-decaprenyl phosphate binding site. The next 3 membrane-spanning stretches (helical) occupy residues 218–238 (LRFV…LWAF), 244–264 (SGSW…RYAV), and 282–302 (RVLQ…VAFG).

This sequence belongs to the UbiA prenyltransferase family. DPPR synthase subfamily. As to quaternary structure, homotrimer. Requires Mg(2+) as cofactor.

The protein resides in the cell inner membrane. The catalysed reaction is trans,octa-cis-decaprenyl phosphate + 5-phospho-alpha-D-ribose 1-diphosphate + H(+) = trans,octa-cis-decaprenylphospho-beta-D-ribofuranose 5-phosphate + diphosphate. It functions in the pathway cell wall biogenesis; cell wall polysaccharide biosynthesis. Functionally, involved in the biosynthesis of decaprenylphosphoryl arabinose (DPA) a precursor for arabinan synthesis in mycobacterial cell wall biosynthesis. Catalyzes the transfer of a 5-phosphoribosyl residue from phosphoribose diphosphate (PRPP) to decaprenyl phosphate (DP) to form decaprenylphosphoryl-5-phosphoribose (DPPR). In Mycobacterium tuberculosis (strain CDC 1551 / Oshkosh), this protein is Decaprenyl-phosphate phosphoribosyltransferase.